The sequence spans 723 residues: LIM domain-binding protein 3 (723 aa).

One can recognise a PDZ domain in the interval 1–84; sequence MSYSVTLTGP…NLSLTLQKSK (84 aa). Residues serine 44, serine 98, and aspartate 112 each carry the phosphoserine modification. Disordered regions lie at residues 89–134 and 164–193; these read ISTT…GALE and SPVAKASSEGAQGSVSPKVLPGPSQPRQYN. Position 119 is a phosphothreonine (threonine 119). Serine 121 and serine 123 each carry phosphoserine. Position 214 is a phosphoserine (serine 214). The residue at position 216 (arginine 216) is an Omega-N-methylarginine. Phosphoserine is present on residues serine 220, serine 251, and aspartate 288. Disordered stretches follow at residues 280–423 and 436–525; these read GTEY…YSPT and SPAP…PQVT. Alanine 291 is modified (omega-N-methylarginine). A compositionally biased stretch (low complexity) spans 309 to 376; that stretch reads ATSPLLPASA…AAAASPAPSA (68 aa). Isoleucine 327 is subject to Phosphoserine. An Omega-N-methylarginine modification is found at serine 330. The span at 436 to 466 shows a compositional bias: pro residues; that stretch reads SPAPTYTPSPAPTYSPSPAPAYTPSPAPNYT. Over residues 490–509 the composition is skewed to polar residues; sequence DSFSQKFAPGKSTTTVSKQT. Omega-N-methylarginine is present on residues arginine 512 and arginine 529. 3 consecutive LIM zinc-binding domains span residues 545–603, 604–663, and 664–723; these read PLCG…QFFA, PICA…LFST, and KCHG…AINV.

Interacts via its LIM domains with various PKC isoforms. Interacts via its PDZ domain with the ACTN2 C-terminal region. Interacts with MYOZ1, MYOZ2 and MYOZ3. Expressed primarily in adult heart and skeletal muscle, and detected at lower levels in lung. Isoforms are expressed in a tissue-specific manner. Isoform 1, isoform 3 and isoform 5 are expressed in heart, whereas isoform 2, isoform 4 and isoform 6 are expressed in skeletal muscle.

The protein resides in the cytoplasm. Its subcellular location is the perinuclear region. The protein localises to the cell projection. It localises to the pseudopodium. It is found in the cytoskeleton. The protein resides in the myofibril. Its subcellular location is the sarcomere. The protein localises to the z line. Its function is as follows. May function as an adapter in striated muscle to couple protein kinase C-mediated signaling via its LIM domains to the cytoskeleton. The sequence is that of LIM domain-binding protein 3 from Mus musculus (Mouse).